A 235-amino-acid polypeptide reads, in one-letter code: Small ribosomal subunit protein eS6 (235 aa).

2 positions are modified to phosphoserine: S229 and S230.

This sequence belongs to the eukaryotic ribosomal protein eS6 family. Post-translationally, phosphorylated.

The protein is Small ribosomal subunit protein eS6 (RPS6) of Kluyveromyces marxianus (Yeast).